The following is a 747-amino-acid chain: DNA ligase (747 aa).

NAD(+) contacts are provided by residues Asp113–Asp117, Ser161–Ile162, and Glu190. Lys192 serves as the catalytic N6-AMP-lysine intermediate. NAD(+)-binding residues include Arg213, Glu249, Lys364, and Lys388. Zn(2+) is bound by residues Cys479, Cys482, Cys495, and Cys501. In terms of domain architecture, BRCT spans Thr660–Pro747.

The protein belongs to the NAD-dependent DNA ligase family. LigA subfamily. Mg(2+) is required as a cofactor. Mn(2+) serves as cofactor.

The catalysed reaction is NAD(+) + (deoxyribonucleotide)n-3'-hydroxyl + 5'-phospho-(deoxyribonucleotide)m = (deoxyribonucleotide)n+m + AMP + beta-nicotinamide D-nucleotide.. In terms of biological role, DNA ligase that catalyzes the formation of phosphodiester linkages between 5'-phosphoryl and 3'-hydroxyl groups in double-stranded DNA using NAD as a coenzyme and as the energy source for the reaction. It is essential for DNA replication and repair of damaged DNA. This Haloquadratum walsbyi (strain DSM 16790 / HBSQ001) protein is DNA ligase.